The following is a 145-amino-acid chain: 3-hydroxyacyl-[acyl-carrier-protein] dehydratase FabZ (145 aa).

The active site involves histidine 49.

Belongs to the thioester dehydratase family. FabZ subfamily.

It is found in the cytoplasm. The enzyme catalyses a (3R)-hydroxyacyl-[ACP] = a (2E)-enoyl-[ACP] + H2O. In terms of biological role, involved in unsaturated fatty acids biosynthesis. Catalyzes the dehydration of short chain beta-hydroxyacyl-ACPs and long chain saturated and unsaturated beta-hydroxyacyl-ACPs. The polypeptide is 3-hydroxyacyl-[acyl-carrier-protein] dehydratase FabZ (Rickettsia massiliae (strain Mtu5)).